The primary structure comprises 344 residues: Glutamine synthetase (344 aa).

The region spanning Tyr4–Gly86 is the GS beta-grasp domain. Positions Pro89 to Ala344 constitute a GS catalytic domain. Mg(2+) contacts are provided by Glu109 and Glu111. Residue Glu167 participates in ATP binding. The Mg(2+) site is built by Glu172 and Glu179. Position 278 (Glu278) interacts with L-glutamate.

Belongs to the glutamine synthetase family. In terms of assembly, homooctamer and homotetramer. Requires Mg(2+) as cofactor.

The protein resides in the cytoplasm. It catalyses the reaction L-glutamate + NH4(+) + ATP = L-glutamine + ADP + phosphate + H(+). In terms of biological role, catalyzes the ATP-dependent biosynthesis of glutamine from glutamate and ammonia. The chain is Glutamine synthetase from Bradyrhizobium diazoefficiens (strain JCM 10833 / BCRC 13528 / IAM 13628 / NBRC 14792 / USDA 110).